We begin with the raw amino-acid sequence, 200 residues long: Protein OPI10 homolog (200 aa).

This sequence belongs to the OPI10 family.

It localises to the cytoplasm. The protein resides in the nucleus envelope. The protein is Protein OPI10 homolog of Schizosaccharomyces pombe (strain 972 / ATCC 24843) (Fission yeast).